Reading from the N-terminus, the 381-residue chain is Creatine kinase M-type (381 aa).

Residues 11–98 form the Phosphagen kinase N-terminal domain; sequence KLNYKSEEEY…FDPIIQDRHG (88 aa). The 243-residue stretch at 125 to 367 folds into the Phosphagen kinase C-terminal domain; it reads YVLSSRVRTG…KLMVEMEKKL (243 aa). 128 to 132 is an ATP binding site; sequence SSRVR. S164 is subject to Phosphoserine. T166 bears the Phosphothreonine mark. S178 bears the Phosphoserine mark. T180 carries the phosphothreonine modification. H191 provides a ligand contact to ATP. S199 bears the Phosphoserine mark. The ATP site is built by R236 and R292. Phosphothreonine is present on residues T313 and T322. 320-325 serves as a coordination point for ATP; the sequence is RGTGGV. Phosphoserine is present on S372.

The protein belongs to the ATP:guanido phosphotransferase family. As to quaternary structure, dimer of identical or non-identical chains, which can be either B (brain type) or M (muscle type). With MM being the major form in skeletal muscle and myocardium, MB existing in myocardium, and BB existing in many tissues, especially brain.

It catalyses the reaction creatine + ATP = N-phosphocreatine + ADP + H(+). Functionally, reversibly catalyzes the transfer of phosphate between ATP and various phosphogens (e.g. creatine phosphate). Creatine kinase isoenzymes play a central role in energy transduction in tissues with large, fluctuating energy demands, such as skeletal muscle, heart, brain and spermatozoa. In Oryctolagus cuniculus (Rabbit), this protein is Creatine kinase M-type (CKM).